Consider the following 416-residue polypeptide: Orexin/Hypocretin receptor type 1 (416 aa).

A disordered region spans residues 1-22 (MEPSATPGAQPGVPTSSGEPFH). Residues 1-46 (MEPSATPGAQPGVPTSSGEPFHLPPDYEDEFLRYLWRDYLYPKQYE) are Extracellular-facing. A required for response to orexin-A region spans residues 26–41 (DYEDEFLRYLWRDYLY). The chain crosses the membrane as a helical span at residues 47–67 (WVLIAAYVAVFLIALVGNTLV). Residues 68–82 (CLAVWRNHHMRTVTN) lie on the Cytoplasmic side of the membrane. Residues 83-105 (YFIVNLSLADVLVTAICLPASLL) form a helical membrane-spanning segment. The Extracellular portion of the chain corresponds to 106 to 119 (VDITESWLFGHALC). Cys-119 and Cys-202 form a disulfide bridge. A helical transmembrane segment spans residues 120–140 (KVIPYLQAVSVSVAVLTLSFI). Topologically, residues 141 to 160 (ALDRWYAICHPLLFKSTARR) are cytoplasmic. Residues 161-182 (ARGSILGIWAVSLAVMVPQAAV) traverse the membrane as a helical segment. The Extracellular segment spans residues 183–213 (MECSSVLPELANRTRLFSVCDERWADELYPK). Asn-194 carries N-linked (GlcNAc...) asparagine glycosylation. A helical membrane pass occupies residues 214-235 (IYHSCFFFVTYLAPLGLMGMAY). The Cytoplasmic segment spans residues 236–298 (FQIFRKLWGP…QMRARRKTAK (63 aa)). The helical transmembrane segment at 299 to 321 (MLMVVLLVFALCYLPISVLNVLK) threads the bilayer. Over 322–336 (RVFGMFRQASDREAV) the chain is Extracellular. Residues 337-360 (YACFTFSHWLVYANSAANPIIYNF) form a helical membrane-spanning segment. The Cytoplasmic portion of the chain corresponds to 361 to 416 (LSGKFREQFKAAFSCCLPGLGPSSSARHKSLSLQSRCSVSKVSEHVVLTTVTTVLS).

It belongs to the G-protein coupled receptor 1 family. Highly expressed in the brain in the prefrontal cortex, hippocampus, paraventricular thalamus, ventromedial hypothalamus, arcuate nucleus, dorsal raphe nucleus, and locus coeruleus. Not detected in the spleen, lung, liver, skeletal muscle, kidney and testis. Orexin receptor mRNA expression has also been reported in the adrenal gland, enteric nervous system, and pancreas.

It is found in the cell membrane. Moderately selective excitatory receptor for orexin-A and, with a lower affinity, for orexin-B neuropeptide. Triggers an increase in cytoplasmic Ca(2+) levels in response to orexin-A binding. This chain is Orexin/Hypocretin receptor type 1, found in Rattus norvegicus (Rat).